A 69-amino-acid polypeptide reads, in one-letter code: Large ribosomal subunit protein bL31 (69 aa).

Zn(2+) contacts are provided by C16, C18, C38, and C41.

The protein belongs to the bacterial ribosomal protein bL31 family. Type A subfamily. Part of the 50S ribosomal subunit. The cofactor is Zn(2+).

Functionally, binds the 23S rRNA. This chain is Large ribosomal subunit protein bL31, found in Thermobifida fusca (strain YX).